Reading from the N-terminus, the 1099-residue chain is Exonuclease/helicase subunit RexB (1099 aa).

[4Fe-4S] cluster contacts are provided by C766, C1056, C1059, and C1065.

It belongs to the helicase family. AddB/RexB type 2 subfamily. As to quaternary structure, heterodimer of RexA (AddA) and RexB. Mg(2+) serves as cofactor. The cofactor is [4Fe-4S] cluster.

Functionally, the heterodimer acts both as an ATP-dependent DNA helicase and an ATP-dependent, dual-direction single-stranded exonuclease. Recognizes the L.lactis chi site (5'-GCGCGTG-3'), which stimulates homologous recombination. This subunit has 5'-&gt;3' exonuclease activity. In terms of biological role, the heterodimer acts as both an ATP-dependent DNA helicase and an ATP-dependent, dual-direction single-stranded exonuclease. Recognizes the chi site generating a DNA molecule suitable for the initiation of homologous recombination. This subunit has 5' -&gt; 3' nuclease activity but not helicase activity. The protein is Exonuclease/helicase subunit RexB of Lactococcus lactis subsp. cremoris (strain MG1363).